The primary structure comprises 225 residues: C-reactive protein (225 aa).

An N-terminal signal peptide occupies residues 1 to 19 (MEKLLWCSLVMIGFSQAFA). At Gln20 the chain carries Pyrrolidone carboxylic acid. The 202-residue stretch at 24-225 (SKTAFVFPKE…DVFIKPQLWP (202 aa)) folds into the Pentraxin (PTX) domain. Cys55 and Cys116 are joined by a disulfide. Ca(2+) contacts are provided by Asn80, Glu157, Gln158, Asp159, and Gln169.

It belongs to the pentraxin family. As to quaternary structure, homopentamer. Pentraxin (or pentaxin) have a discoid arrangement of 5 non-covalently bound subunits. Interacts with FCN1; may regulate monocyte activation by FCN1. Ca(2+) serves as cofactor. As to expression, found in plasma.

Its subcellular location is the secreted. Displays several functions associated with host defense: it promotes agglutination, bacterial capsular swelling, phagocytosis and complement fixation through its calcium-dependent binding to phosphorylcholine. Can interact with DNA and histones and may scavenge nuclear material released from damaged circulating cells. This is C-reactive protein (CRP) from Mesocricetus auratus (Golden hamster).